We begin with the raw amino-acid sequence, 765 residues long: LPS-assembly protein LptD (765 aa).

Residues 1–18 (MQIRYLLALSLLPKLVLA) form the signal peptide.

This sequence belongs to the LptD family. In terms of assembly, component of the lipopolysaccharide transport and assembly complex. Interacts with LptE and LptA.

It localises to the cell outer membrane. Functionally, together with LptE, is involved in the assembly of lipopolysaccharide (LPS) at the surface of the outer membrane. This chain is LPS-assembly protein LptD, found in Shewanella oneidensis (strain ATCC 700550 / JCM 31522 / CIP 106686 / LMG 19005 / NCIMB 14063 / MR-1).